The primary structure comprises 137 residues: Basic phospholipase A2 homolog Ts-R6 (137 aa).

Residues 1–16 (MRTLWIMAVLLLGVEG) form the signal peptide. Cystine bridges form between Cys42–Cys130, Cys44–Cys60, Cys59–Cys110, Cys65–Cys137, Cys66–Cys103, Cys73–Cys97, and Cys91–Cys101.

Expressed by the venom gland.

Its subcellular location is the secreted. Its function is as follows. Snake venom phospholipase A2 homolog that induces local edema a few hours after injection (5-10 ug) in the hind paw and shows weak anticoagulant and myotoxic activities. This Trimeresurus stejnegeri (Chinese green tree viper) protein is Basic phospholipase A2 homolog Ts-R6.